The following is a 70-amino-acid chain: Putative membrane protein insertion efficiency factor (70 aa).

Belongs to the UPF0161 family.

It localises to the cell membrane. Its function is as follows. Could be involved in insertion of integral membrane proteins into the membrane. This chain is Putative membrane protein insertion efficiency factor, found in Clostridium novyi (strain NT).